A 512-amino-acid chain; its full sequence is 2,3-bisphosphoglycerate-independent phosphoglycerate mutase (512 aa).

Asp-12 and Ser-62 together coordinate Mn(2+). The active-site Phosphoserine intermediate is Ser-62. Substrate-binding positions include His-123, 154–155, Arg-181, Arg-187, 253–256, and Lys-336; these read RD and RPDR. Mn(2+) is bound by residues Asp-403, His-407, Asp-444, His-445, and His-462.

This sequence belongs to the BPG-independent phosphoglycerate mutase family. In terms of assembly, monomer. It depends on Mn(2+) as a cofactor.

It carries out the reaction (2R)-2-phosphoglycerate = (2R)-3-phosphoglycerate. It functions in the pathway carbohydrate degradation; glycolysis; pyruvate from D-glyceraldehyde 3-phosphate: step 3/5. Catalyzes the interconversion of 2-phosphoglycerate and 3-phosphoglycerate. The sequence is that of 2,3-bisphosphoglycerate-independent phosphoglycerate mutase from Aster yellows witches'-broom phytoplasma (strain AYWB).